The sequence spans 640 residues: Biosynthetic arginine decarboxylase (640 aa).

At Lys-105 the chain carries N6-(pyridoxal phosphate)lysine. 290-300 (FDVGGGLAVDY) contributes to the substrate binding site.

This sequence belongs to the Orn/Lys/Arg decarboxylase class-II family. SpeA subfamily. Mg(2+) is required as a cofactor. The cofactor is pyridoxal 5'-phosphate.

The catalysed reaction is L-arginine + H(+) = agmatine + CO2. Catalyzes the biosynthesis of agmatine from arginine. In Vibrio cholerae serotype O1 (strain ATCC 39315 / El Tor Inaba N16961), this protein is Biosynthetic arginine decarboxylase.